Consider the following 191-residue polypeptide: Putative RNA-binding protein EEED8.4 (191 aa).

The RRM domain maps to 55–132; the sequence is KSVFIGNVDF…RPIVVTAKRT (78 aa). The segment at 136–160 is disordered; it reads GMGHGVRGSSRGTFGRGRGAARGAP.

The polypeptide is Putative RNA-binding protein EEED8.4 (Caenorhabditis elegans).